The chain runs to 183 residues: Large ribosomal subunit protein uL5 (183 aa).

It belongs to the universal ribosomal protein uL5 family. As to quaternary structure, part of the 50S ribosomal subunit; part of the 5S rRNA/L5/L18/L25 subcomplex. Contacts the 5S rRNA and the P site tRNA. Forms a bridge to the 30S subunit in the 70S ribosome.

This is one of the proteins that bind and probably mediate the attachment of the 5S RNA into the large ribosomal subunit, where it forms part of the central protuberance. In the 70S ribosome it contacts protein S13 of the 30S subunit (bridge B1b), connecting the 2 subunits; this bridge is implicated in subunit movement. Contacts the P site tRNA; the 5S rRNA and some of its associated proteins might help stabilize positioning of ribosome-bound tRNAs. This chain is Large ribosomal subunit protein uL5, found in Kosmotoga olearia (strain ATCC BAA-1733 / DSM 21960 / TBF 19.5.1).